We begin with the raw amino-acid sequence, 556 residues long: Chaperone protein HscC (556 aa).

Belongs to the heat shock protein 70 family.

In terms of biological role, probable chaperone. Has ATPase activity. Not stimulated by DnaJ. This Escherichia coli (strain K12) protein is Chaperone protein HscC (hscC).